The sequence spans 284 residues: Bifunctional protein FolD (284 aa).

Residues 163-165 (GAS), Ile-188, and Ile-229 each bind NADP(+).

Belongs to the tetrahydrofolate dehydrogenase/cyclohydrolase family. In terms of assembly, homodimer.

The enzyme catalyses (6R)-5,10-methylene-5,6,7,8-tetrahydrofolate + NADP(+) = (6R)-5,10-methenyltetrahydrofolate + NADPH. The catalysed reaction is (6R)-5,10-methenyltetrahydrofolate + H2O = (6R)-10-formyltetrahydrofolate + H(+). It participates in one-carbon metabolism; tetrahydrofolate interconversion. Its function is as follows. Catalyzes the oxidation of 5,10-methylenetetrahydrofolate to 5,10-methenyltetrahydrofolate and then the hydrolysis of 5,10-methenyltetrahydrofolate to 10-formyltetrahydrofolate. The chain is Bifunctional protein FolD from Nautilia profundicola (strain ATCC BAA-1463 / DSM 18972 / AmH).